The primary structure comprises 612 residues: Probable serine/threonine-protein kinase WNK4 (612 aa).

The Protein kinase domain occupies 25 to 282 (IRYNEVLGRG…AKELLQDPFL (258 aa)). Residues 105–108 (TELF) and Lys155 each bind ATP. Catalysis depends on Asp172, which acts as the Proton acceptor.

It belongs to the protein kinase superfamily. Ser/Thr protein kinase family. WNK subfamily.

It carries out the reaction L-seryl-[protein] + ATP = O-phospho-L-seryl-[protein] + ADP + H(+). It catalyses the reaction L-threonyl-[protein] + ATP = O-phospho-L-threonyl-[protein] + ADP + H(+). This is Probable serine/threonine-protein kinase WNK4 (WNK4) from Oryza sativa subsp. japonica (Rice).